A 132-amino-acid polypeptide reads, in one-letter code: Transmembrane protein C1orf162 homolog (132 aa).

Residues 36–56 (IILAFFAGVLLTLLIVALIFL) traverse the membrane as a helical segment. A disordered region spans residues 95 to 132 (TFKPPEENSNDLTRNHSSGLEPTIYSQIKVTDSDLPLP). Over residues 104 to 124 (NDLTRNHSSGLEPTIYSQIKV) the composition is skewed to polar residues. S111 is modified (phosphoserine).

The protein localises to the membrane. This is Transmembrane protein C1orf162 homolog from Mus musculus (Mouse).